Here is a 36-residue protein sequence, read N- to C-terminus: Alpha-conotoxin-like Pu1.3 (36 aa).

Residues 1-21 constitute a propeptide that is removed on maturation; sequence SDGRNAGADRKGFGLISQMFK. Disulfide bonds link cysteine 24–cysteine 30 and cysteine 25–cysteine 36.

The protein belongs to the conotoxin A superfamily. As to expression, expressed by the venom duct.

It is found in the secreted. Its function is as follows. Alpha-conotoxins act on postsynaptic membranes, they bind to the nicotinic acetylcholine receptors (nAChR) and thus inhibit them. The chain is Alpha-conotoxin-like Pu1.3 from Conus pulicarius (Flea-bitten cone).